The sequence spans 239 residues: Probable transcriptional regulatory protein BC_0539 (239 aa).

It belongs to the TACO1 family. YeeN subfamily.

The protein resides in the cytoplasm. The protein is Probable transcriptional regulatory protein BC_0539 of Bacillus cereus (strain ATCC 14579 / DSM 31 / CCUG 7414 / JCM 2152 / NBRC 15305 / NCIMB 9373 / NCTC 2599 / NRRL B-3711).